Consider the following 737-residue polypeptide: Propionyl-CoA carboxylase alpha chain, mitochondrial (737 aa).

The N-terminal 61 residues, 1 to 61 (MAGLWVRTVA…QCLVVSRSLS (61 aa)), are a transit peptide targeting the mitochondrion. A Biotin carboxylation domain is found at 71–518 (TFDKILIANR…STKFLSDVYP (448 aa)). Lys-74 carries the post-translational modification N6-acetyllysine; alternate. N6-succinyllysine; alternate is present on Lys-74. Lys-128 carries the N6-succinyllysine modification. Lys-159 bears the N6-acetyllysine; alternate mark. N6-succinyllysine; alternate is present on Lys-159. Lys-163 bears the N6-acetyllysine mark. Lys-186 serves as a coordination point for ATP. Positions 190-387 (KLLAKRAKVN…LVQEMILVAK (198 aa)) constitute an ATP-grasp domain. Position 197 is an N6-succinyllysine (Lys-197). The residue at position 209 (Lys-209) is an N6-acetyllysine; alternate. Residue Lys-209 is modified to N6-succinyllysine; alternate. ATP-binding positions include 218 to 279 (AREI…PRHI), Glu-270, and Asn-305. Phosphoserine is present on Ser-261. Lys-271 is subject to N6-succinyllysine. Lys-337 bears the N6-acetyllysine; alternate mark. Position 337 is an N6-succinyllysine; alternate (Lys-337). Mg(2+) contacts are provided by Glu-345, Glu-358, and Asn-360. Positions 345, 358, and 360 each coordinate Mn(2+). Residue Arg-362 is part of the active site. Lys-394 and Lys-416 each carry N6-succinyllysine. Phe-418 contributes to the biotin binding site. Position 505 is an N6-acetyllysine (Lys-505). N6-succinyllysine occurs at positions 511, 522, 567, and 657. A Biotinyl-binding domain is found at 658–737 (FMLEKVPKDT…GEGDLLVELE (80 aa)). At Lys-703 the chain carries N6-biotinyllysine; by HLCS.

The holoenzyme is a dodecamer composed of 6 PCCA/alpha subunits and 6 PCCB/beta subunits. Interacts (via the biotin carboxylation domain) with SIRT4. Interacts with SIRT3 and SIRT5. Requires biotin as cofactor. Mg(2+) is required as a cofactor. It depends on Mn(2+) as a cofactor. In terms of processing, acetylated. The biotin cofactor is covalently attached to the C-terminal biotinyl-binding domain and is required for the catalytic activity. Biotinylation is catalyzed by HLCS.

It localises to the mitochondrion matrix. It carries out the reaction propanoyl-CoA + hydrogencarbonate + ATP = (S)-methylmalonyl-CoA + ADP + phosphate + H(+). The catalysed reaction is butanoyl-CoA + hydrogencarbonate + ATP = (2S)-ethylmalonyl-CoA + ADP + phosphate + H(+). The protein operates within metabolic intermediate metabolism; propanoyl-CoA degradation; succinyl-CoA from propanoyl-CoA: step 1/3. Functionally, this is one of the 2 subunits of the biotin-dependent propionyl-CoA carboxylase (PCC), a mitochondrial enzyme involved in the catabolism of odd chain fatty acids, branched-chain amino acids isoleucine, threonine, methionine, and valine and other metabolites. Propionyl-CoA carboxylase catalyzes the carboxylation of propionyl-CoA/propanoyl-CoA to D-methylmalonyl-CoA/(S)-methylmalonyl-CoA. Within the holoenzyme, the alpha subunit catalyzes the ATP-dependent carboxylation of the biotin carried by the biotin carboxyl carrier (BCC) domain, while the beta subunit then transfers the carboxyl group from carboxylated biotin to propionyl-CoA. Propionyl-CoA carboxylase also significantly acts on butyryl-CoA/butanoyl-CoA, which is converted to ethylmalonyl-CoA/(2S)-ethylmalonyl-CoA. Other alternative minor substrates include (2E)-butenoyl-CoA/crotonoyl-CoA. In Rattus norvegicus (Rat), this protein is Propionyl-CoA carboxylase alpha chain, mitochondrial.